The sequence spans 1008 residues: G protein-regulated inducer of neurite outgrowth 1 (1008 aa).

Residues 1–859 (MDTAEDPAWL…SPPSRRDAGL (859 aa)) form a disordered region. Position 60 is a phosphothreonine (Thr60). Phosphoserine is present on residues Ser64 and Ser75. Polar residues predominate over residues 117–127 (ISGTPEATTSG). Basic and acidic residues-rich tracts occupy residues 137–159 (TEPK…KSSK), 167–178 (GKEDPGSSRKAD), 230–269 (PRKE…HPVS), and 279–291 (EKVD…KRDP). Ser237 carries the phosphoserine modification. Composition is skewed to polar residues over residues 326 to 336 (SGKNGPVSSGT) and 391 to 406 (HTDT…TSLK). A phosphoserine mark is found at Ser436 and Ser452. A compositionally biased stretch (basic and acidic residues) spans 454-466 (GKEDPVSSRREDP). Residues 481 to 491 (PESSGKTNPVS) are compositionally biased toward polar residues. A compositionally biased stretch (basic and acidic residues) spans 549–559 (GKEDPVSKGKA). Residue Ser615 is modified to Phosphoserine. Low complexity predominate over residues 643 to 656 (PGQEGAAAPGEAGA). Positions 659–679 (LKKETPQASEKVDPGSCRKAE) are enriched in basic and acidic residues. Ser737 is subject to Phosphoserine. Residues 742 to 752 (RGSEGRVEPKA) show a composition bias toward basic and acidic residues. The span at 755 to 764 (VSSTEASSLG) shows a compositional bias: polar residues. Ser799 carries the phosphoserine modification. Residues 838 to 847 (SAFSFQAAPR) are compositionally biased toward low complexity. Residue Thr877 is modified to Phosphothreonine. Phosphoserine occurs at positions 895 and 914. Positions 899–1008 (AAVAPPEPAE…CCSRAGPTAE (110 aa)) are interaction with GNAO1. The segment at 943–986 (ERQIEEHGRQGAPAPPPAARAGPGRSGSVRTAPPDGAAKRPPGL) is disordered. The residue at position 993 (Ser993) is a Phosphoserine. 2 S-palmitoyl cysteine lipidation sites follow: Cys999 and Cys1000.

In terms of assembly, interacts with activated forms of GNAI1, GNAO1 and GNAZ. Palmitoylation on Cys-999 and/or Cys-1000 is required for membrane targeting. Widely expressed in the central nervous system, with highest levels in spinal cord.

Its subcellular location is the cell membrane. The protein resides in the cell projection. It is found in the growth cone. Its function is as follows. May be involved in neurite outgrowth. The protein is G protein-regulated inducer of neurite outgrowth 1 (GPRIN1) of Homo sapiens (Human).